A 206-amino-acid chain; its full sequence is Guanylyl cyclase inhibitory protein (206 aa).

Residue glycine 2 is the site of N-myristoyl glycine attachment. EF-hand domains are found at residues 31–49 (SGLI…VTVG), 51–86 (NSSE…LAHG), 87–122 (TPED…VYKM), and 135–170 (TAEE…DEWV). Positions 64, 66, 68, 75, 100, 102, 104, and 111 each coordinate Ca(2+).

As to expression, retina; inner segments, somata and synaptic terminals of cone receptors.

In terms of biological role, does not stimulate guanylyl cyclase (GC) when free calcium ion concentration is low, but inhibits GC when free calcium ions concentration is elevated. In Lithobates pipiens (Northern leopard frog), this protein is Guanylyl cyclase inhibitory protein (GCIP).